The following is a 434-amino-acid chain: Adenylosuccinate synthetase (434 aa).

GTP contacts are provided by residues Gly12 to Lys18 and Gly40 to Thr42. Asp13 serves as the catalytic Proton acceptor. Positions 13 and 40 each coordinate Mg(2+). Residues Asp13–Lys16, Asn38–His41, Thr129, Arg143, Gln224, Thr239, and Arg303 each bind IMP. His41 (proton donor) is an active-site residue. Ala299–Arg305 contributes to the substrate binding site. GTP-binding positions include Arg305, Lys331–Asp333, and Ser413–Gly415.

The protein belongs to the adenylosuccinate synthetase family. As to quaternary structure, homodimer. Mg(2+) is required as a cofactor.

The protein localises to the cytoplasm. The enzyme catalyses IMP + L-aspartate + GTP = N(6)-(1,2-dicarboxyethyl)-AMP + GDP + phosphate + 2 H(+). The protein operates within purine metabolism; AMP biosynthesis via de novo pathway; AMP from IMP: step 1/2. Functionally, plays an important role in the de novo pathway of purine nucleotide biosynthesis. Catalyzes the first committed step in the biosynthesis of AMP from IMP. The chain is Adenylosuccinate synthetase from Solibacter usitatus (strain Ellin6076).